A 712-amino-acid chain; its full sequence is Methionine--tRNA ligase (712 aa).

The 'HIGH' region signature appears at 20–30 (PYANGKAHIGH). Residues Cys-151, Cys-154, Cys-163, and Cys-167 each coordinate Zn(2+). A 'KMSKS' region motif is present at residues 334-338 (KFSKT). ATP is bound at residue Lys-337. Positions 559–585 (ANAKKSAAKGGEKEPSKSEGMGPSEEA) are disordered. In terms of domain architecture, tRNA-binding spans 610–712 (DFAKLDIRVG…KEIKPGSRIR (103 aa)).

This sequence belongs to the class-I aminoacyl-tRNA synthetase family. MetG type 1 subfamily. As to quaternary structure, homodimer. Zn(2+) is required as a cofactor.

The protein localises to the cytoplasm. It carries out the reaction tRNA(Met) + L-methionine + ATP = L-methionyl-tRNA(Met) + AMP + diphosphate. Is required not only for elongation of protein synthesis but also for the initiation of all mRNA translation through initiator tRNA(fMet) aminoacylation. This is Methionine--tRNA ligase from Methanosarcina acetivorans (strain ATCC 35395 / DSM 2834 / JCM 12185 / C2A).